Reading from the N-terminus, the 144-residue chain is Peptide methionine sulfoxide reductase MsrB (144 aa).

The span at 1-12 shows a compositional bias: basic and acidic residues; it reads MDKQQGELRQRL. Residues 1 to 25 are disordered; sequence MDKQQGELRQRLTPEQYAVTQEAAT. One can recognise a MsrB domain in the interval 5 to 128; it reads QGELRQRLTP…NSAALKFIPV (124 aa). The active-site Nucleophile is Cys-117.

Belongs to the MsrB Met sulfoxide reductase family.

It carries out the reaction L-methionyl-[protein] + [thioredoxin]-disulfide + H2O = L-methionyl-(R)-S-oxide-[protein] + [thioredoxin]-dithiol. The polypeptide is Peptide methionine sulfoxide reductase MsrB (Lactiplantibacillus plantarum (strain ATCC BAA-793 / NCIMB 8826 / WCFS1) (Lactobacillus plantarum)).